Consider the following 200-residue polypeptide: uncharacterized protein (200 aa).

Involved in osmoadaptation. This is an uncharacterized protein from Emericella nidulans (strain FGSC A4 / ATCC 38163 / CBS 112.46 / NRRL 194 / M139) (Aspergillus nidulans).